A 132-amino-acid chain; its full sequence is Methenyltetrahydromethanopterin cyclohydrolase (132 aa).

Belongs to the MCH family.

Its subcellular location is the cytoplasm. It catalyses the reaction 5,10-methenyl-5,6,7,8-tetrahydromethanopterin + H2O = N(5)-formyl-5,6,7,8-tetrahydromethanopterin + H(+). It functions in the pathway one-carbon metabolism; formaldehyde degradation; formate from formaldehyde (H(4)MPT route): step 3/5. In terms of biological role, catalyzes the hydrolysis of methenyl-H(4)MPT(+) to 5-formyl-H(4)MPT. This Methylomonas rubra protein is Methenyltetrahydromethanopterin cyclohydrolase (mch).